The following is a 361-amino-acid chain: Phospho-N-acetylmuramoyl-pentapeptide-transferase (361 aa).

10 helical membrane-spanning segments follow: residues 28-48 (LAII…IKFL), 74-94 (TMGG…LADL), 99-119 (IWIT…DDYA), 133-153 (SKLV…EYLD), 168-188 (LNLD…VGSS), 203-223 (VPIA…GNLI), 236-256 (TGEL…FLWF), 263-283 (VFMG…ISVI), 288-308 (IVLA…ILQV), and 338-358 (KVVI…LSSL).

The protein belongs to the glycosyltransferase 4 family. MraY subfamily. Mg(2+) serves as cofactor.

It localises to the cell inner membrane. The catalysed reaction is UDP-N-acetyl-alpha-D-muramoyl-L-alanyl-gamma-D-glutamyl-meso-2,6-diaminopimeloyl-D-alanyl-D-alanine + di-trans,octa-cis-undecaprenyl phosphate = di-trans,octa-cis-undecaprenyl diphospho-N-acetyl-alpha-D-muramoyl-L-alanyl-D-glutamyl-meso-2,6-diaminopimeloyl-D-alanyl-D-alanine + UMP. It functions in the pathway cell wall biogenesis; peptidoglycan biosynthesis. Catalyzes the initial step of the lipid cycle reactions in the biosynthesis of the cell wall peptidoglycan: transfers peptidoglycan precursor phospho-MurNAc-pentapeptide from UDP-MurNAc-pentapeptide onto the lipid carrier undecaprenyl phosphate, yielding undecaprenyl-pyrophosphoryl-MurNAc-pentapeptide, known as lipid I. In Rickettsia akari (strain Hartford), this protein is Phospho-N-acetylmuramoyl-pentapeptide-transferase.